A 312-amino-acid chain; its full sequence is Adenylyl-sulfate kinase, chloroplastic (312 aa).

142–149 contacts ATP; the sequence is GLSGSGKS. The active-site Phosphoserine intermediate is the S216.

It belongs to the APS kinase family.

It localises to the plastid. It is found in the chloroplast. It catalyses the reaction adenosine 5'-phosphosulfate + ATP = 3'-phosphoadenylyl sulfate + ADP + H(+). The protein operates within sulfur metabolism; hydrogen sulfide biosynthesis; sulfite from sulfate: step 2/3. In terms of biological role, catalyzes the synthesis of activated sulfate. The protein is Adenylyl-sulfate kinase, chloroplastic (AKN) of Catharanthus roseus (Madagascar periwinkle).